The following is a 139-amino-acid chain: D-ribose pyranase (139 aa).

The active-site Proton donor is His20. Residues Asp28, His106, and Tyr128–Asn130 contribute to the substrate site.

The protein belongs to the RbsD / FucU family. RbsD subfamily. As to quaternary structure, homodecamer.

It is found in the cytoplasm. The enzyme catalyses beta-D-ribopyranose = beta-D-ribofuranose. It participates in carbohydrate metabolism; D-ribose degradation; D-ribose 5-phosphate from beta-D-ribopyranose: step 1/2. Functionally, catalyzes the interconversion of beta-pyran and beta-furan forms of D-ribose. The sequence is that of D-ribose pyranase from Glaesserella parasuis serovar 5 (strain SH0165) (Haemophilus parasuis).